Consider the following 540-residue polypeptide: Cytochrome P450 monooxygenase ptmG (540 aa).

The N-linked (GlcNAc...) asparagine glycan is linked to asparagine 17. The next 2 membrane-spanning stretches (helical) occupy residues valine 20–isoleucine 40 and alanine 325–leucine 345. Residue cysteine 474 participates in heme binding.

The protein belongs to the cytochrome P450 family. Heme is required as a cofactor.

Its subcellular location is the membrane. It participates in secondary metabolite biosynthesis. In terms of biological role, cytochrome P450 monooxygenase; part of the gene cluster that mediates the biosynthesis of the indole diterpenes penitrems. The geranylgeranyl diphosphate (GGPP) synthase ptmG catalyzes the first step in penitrem biosynthesis via conversion of farnesyl pyrophosphate and isopentyl pyrophosphate into geranylgeranyl pyrophosphate (GGPP). Condensation of indole-3-glycerol phosphate with GGPP by the prenyl transferase ptmC then forms 3-geranylgeranylindole (3-GGI). Epoxidation by the FAD-dependent monooxygenase ptmM leads to a epoxidized-GGI that is substrate of the terpene cyclase ptmB for cyclization to yield paspaline. Paspaline is subsequently converted to 13-desoxypaxilline by the cytochrome P450 monooxygenase ptmP, the latter being then converted to paxilline by the cytochrome P450 monooxygenase ptmQ. Paxilline is converted to beta-paxitriol via C-10 ketoreduction by the short-chain dehydrogenase ptmH which can be monoprenylated at the C-20 by the indole diterpene prenyltransferase ptmD. A two-step elimination (acetylation and elimination) process performed by the O-acetyltransferase ptmV and ptmI leads to the production of the prenylated form of penijanthine. The FAD-linked oxidoreductase ptmO then converts the prenylated form of penijanthine into PC-M5 which is in turn transformed into PC-M4 by the aromatic dimethylallyltransferase ptmE. Five sequential oxidative transformations performed by the cytochrome P450 monooxygenases ptmK, ptmU, ptmL, ptmN and ptmJ yield the various penitrem compounds. PtmK, ptmU and ptmM are involved in the formation of the key bicyclic ring of penitrem C via the formation of the intermediates secopenitrem D and penitrem D. PtmL catalyzes the epoxidation of penitrem D and C to yield penitrem B and F, respectively. PtmJ catalyzes the last benzylic hydroxylation to convert penitrem B to prenitrem E and penitrem F to penitrem A. The sequence is that of Cytochrome P450 monooxygenase ptmG from Penicillium ochrochloron.